The chain runs to 1118 residues: MEIKDQGAQMEPLLPTRNDEEAVVDRGGTRSILKTHFEKEDLEGHRTLFIGVHVPLGGRKSHRRHRHRGHKHRKRDRERDSGLEDGRESPSFDTPSQRVQFILGTEDDDEEHLPHDLFTELDEICWREGEDAEWRETARWLKFEEDVEDGGERWSKPYVATLSLHSLFELRSCILNGTVLLDMHANTIEEIADMVLDQQVSSGQLNEDVRHRVHEALMKQHHHQNQKKLANRIPIVRSFADIGKKQSEPNSMDKNAGQVVSPQSAPACAENKNDVSRENSTVDFSKGLGGQQKGHTSPCGMKQRLDKGPPHQQEREVDLHFMKKIPPGAEASNILVGELEFLDRTVVAFVRLSPAVLLQGLAEVPIPSRFLFILLGPLGKGQQYHEIGRSIATLMTDEVFHDVAYKAKDRNDLVSGIDEFLDQVTVLPPGEWDPSIRIEPPKNVPSQEKRKIPAVPNGTAAHGEAEPHGGHSGPELQRTGRIFGGLILDIKRKAPFFWSDFRDAFSLQCLASFLFLYCACMSPVITFGGLLGEATEGRISAIESLFGASMTGIAYSLFGGQPLTILGSTGPVLVFEKILFKFCKEYGLSYLSLRASIGLWTATLCIILVATDASSLVCYITRFTEEAFASLICIIFIYEALEKLFELSETYPINMHNDLELLTQYSCNCMEPHSPSNDTLKEWRESNLSASDIIWGNLTVSECRSLHGEYVGRACGHGHPYVPDVLFWSVILFFSTVTMSATLKQFKTSRYFPTKVRSIVSDFAVFLTILCMVLIDYAIGIPSPKLQVPSVFKPTRDDRGWFVTPLGPNPWWTIIAAIIPALLCTILIFMDQQITAVIINRKEHKLKKGCGYHLDLLMVAVMLGVCSIMGLPWFVAATVLSITHVNSLKLESECSAPGEQPKFLGIREQRVTGLMIFILMGSSVFMTSILKFIPMPVLYGVFLYMGASSLKGIQLFDRIKLFWMPAKHQPDFIYLRHVPLRKVHLFTVIQMSCLGLLWIIKVSRAAIVFPMMVLALVFVRKLMDFLFTKRELSWLDDLMPESKKKKLEDAEKEEEQSMLAMEDEGTVQLPLEGHYRDDPSVINISDEMSKTAMWGNLLVTADNSKEKESRFPSKSSPS.

2 disordered regions span residues 1 to 23 (MEIK…EEAV) and 58 to 97 (GRKS…TPSQ). Residues 1–509 (MEIKDQGAQM…DFRDAFSLQC (509 aa)) are Cytoplasmic-facing. Residues 59-76 (RKSHRRHRHRGHKHRKRD) are compositionally biased toward basic residues. Basic and acidic residues predominate over residues 77–90 (RERDSGLEDGRESP). Serine 89 is subject to Phosphoserine. At threonine 94 the chain carries Phosphothreonine. Zn(2+)-binding residues include histidine 221 and histidine 223. 2 disordered regions span residues 269-310 (AENK…KGPP) and 457-476 (NGTA…GPEL). At serine 276 the chain carries Phosphoserine. A helical membrane pass occupies residues 510-530 (LASFLFLYCACMSPVITFGGL). Residues 531–538 (LGEATEGR) are Extracellular-facing. A helical membrane pass occupies residues 539-559 (ISAIESLFGASMTGIAYSLFG). Residues 560 to 562 (GQP) are Cytoplasmic-facing. A helical membrane pass occupies residues 563–583 (LTILGSTGPVLVFEKILFKFC). Over 584 to 596 (KEYGLSYLSLRAS) the chain is Extracellular. A helical membrane pass occupies residues 597–617 (IGLWTATLCIILVATDASSLV). Residues 618–626 (CYITRFTEE) are Cytoplasmic-facing. The chain crosses the membrane as a helical span at residues 627-647 (AFASLICIIFIYEALEKLFEL). At 648–720 (SETYPINMHN…VGRACGHGHP (73 aa)) the chain is on the extracellular side. Asparagine 677, asparagine 687, and asparagine 697 each carry an N-linked (GlcNAc...) asparagine glycan. Residues 721-741 (YVPDVLFWSVILFFSTVTMSA) traverse the membrane as a helical segment. Over 742 to 762 (TLKQFKTSRYFPTKVRSIVSD) the chain is Cytoplasmic. Residues 763–783 (FAVFLTILCMVLIDYAIGIPS) traverse the membrane as a helical segment. Residues 784–809 (PKLQVPSVFKPTRDDRGWFVTPLGPN) lie on the Extracellular side of the membrane. Residues 810–830 (PWWTIIAAIIPALLCTILIFM) form a helical membrane-spanning segment. The Cytoplasmic portion of the chain corresponds to 831–855 (DQQITAVIINRKEHKLKKGCGYHLD). A helical transmembrane segment spans residues 856-876 (LLMVAVMLGVCSIMGLPWFVA). Topologically, residues 877 to 912 (ATVLSITHVNSLKLESECSAPGEQPKFLGIREQRVT) are extracellular. Residues 913–933 (GLMIFILMGSSVFMTSILKFI) traverse the membrane as a helical segment. Residues 934–935 (PM) are Cytoplasmic-facing. A helical membrane pass occupies residues 936–956 (PVLYGVFLYMGASSLKGIQLF). The Extracellular segment spans residues 957-998 (DRIKLFWMPAKHQPDFIYLRHVPLRKVHLFTVIQMSCLGLLW). Residues 999 to 1019 (IIKVSRAAIVFPMMVLALVFV) form a helical membrane-spanning segment. Residues 1020 to 1118 (RKLMDFLFTK…SRFPSKSSPS (99 aa)) are Cytoplasmic-facing. Serine 1057 and serine 1085 each carry phosphoserine.

It belongs to the anion exchanger (TC 2.A.31) family. Post-translationally, N-glycosylated. In the brain, detected in cerebral cortex, subcortex, cerebellum, hippocampus and medulla (at protein level). In the cerebrum, expressed at high levels throughout the cortex, at lower levels in striatum and not detectable in the corpus callosum (at protein level). In the cerebellum, detected at high levels in the molecular layer but at very low levels in the granular layer (at protein level). In the central nervous system, detected in neurons in the olfactory bulb, cortex and cerebellum (at protein level). Within the hippocampus, abundantly expressed in CA3 pyramidal cells (at protein level). Strongly expressed in the retina with high levels in bipolar and amacrine cells (at protein level). Expressed in the epithelial cells of the choroid plexus. During embryonic development, expressed in neurons of the central nervous system. Also expressed in the peripheral nervous system and in non-neuronal tissues such as the dura and some epithelia including the acid-secreting epithelium of the stomach and the duodenal epithelium. In the embryonic retina, expression is restricted to the neuronal cell layer and the retinal pigment epithelium. As to expression, expressed at high levels in brain and at low levels in the pituitary, testis, kidney and ileum. Also expressed in pancreatic islets.

Its subcellular location is the basolateral cell membrane. The protein resides in the apical cell membrane. The protein localises to the cell projection. It is found in the dendrite. It localises to the axon. Its subcellular location is the perikaryon. The protein resides in the presynapse. The protein localises to the postsynapse. It carries out the reaction 2 hydrogencarbonate(out) + chloride(in) + Na(+)(out) = 2 hydrogencarbonate(in) + chloride(out) + Na(+)(in). With respect to regulation, zinc-binding negatively regulates its activity. In terms of biological role, sodium/bicarbonate cotransporter which plays an important role in regulating intracellular pH. Has been shown to act as a sodium/bicarbonate cotransporter in exchange for intracellular chloride. Has also been shown to act as a sodium/biocarbonate cotransporter which is not responsible for net efflux of chloride, with the observed chloride efflux being due to chloride self-exchange. Controls neuronal pH and may contribute to the secretion of cerebrospinal fluid. Acting on presynaptic intracellular pH, it promotes GABA release, reduces the excitability of CA1 pyramidal neurons, and modulates short-term synaptic plasticity. Required in retinal cells to maintain normal pH which is necessary for normal vision. In the kidney, likely to mediate bicarbonate reclamation in the apical membrane of the proximal tubules. Functionally, sodium/bicarbonate cotransporter which mediates cotransport of sodium and bicarbonate in association with an efflux of intracellular chloride. The chain is Sodium-driven chloride bicarbonate exchanger from Mus musculus (Mouse).